We begin with the raw amino-acid sequence, 151 residues long: Deoxyuridine 5'-triphosphate nucleotidohydrolase (151 aa).

Substrate is bound by residues 70–72 (RSG), N83, 87–89 (LID), and M97.

It belongs to the dUTPase family. It depends on Mg(2+) as a cofactor.

The catalysed reaction is dUTP + H2O = dUMP + diphosphate + H(+). It participates in pyrimidine metabolism; dUMP biosynthesis; dUMP from dCTP (dUTP route): step 2/2. In terms of biological role, this enzyme is involved in nucleotide metabolism: it produces dUMP, the immediate precursor of thymidine nucleotides and it decreases the intracellular concentration of dUTP so that uracil cannot be incorporated into DNA. The chain is Deoxyuridine 5'-triphosphate nucleotidohydrolase from Shigella flexneri serotype 5b (strain 8401).